The primary structure comprises 247 residues: ATP synthase subunit a (247 aa).

The next 6 helical transmembrane spans lie at 24-44, 82-102, 112-132, 141-161, 194-214, and 219-239; these read IAFTNSSAYMLVAVVLTSLLM, FFPFVFTIFMLVTVSNLVGIV, IIVTAALAFLVFFTVLIYGFY, LFVPSGIPIVILPLVVAIEVI, MLGAMGIVGVFGAVLPLALVV, and LELLVAFLQAYVFTILTCIYI.

The protein belongs to the ATPase A chain family. In terms of assembly, F-type ATPases have 2 components, CF(1) - the catalytic core - and CF(0) - the membrane proton channel. CF(1) has five subunits: alpha(3), beta(3), gamma(1), delta(1), epsilon(1). CF(0) has three main subunits: a(1), b(2) and c(9-12). The alpha and beta chains form an alternating ring which encloses part of the gamma chain. CF(1) is attached to CF(0) by a central stalk formed by the gamma and epsilon chains, while a peripheral stalk is formed by the delta and b chains.

Its subcellular location is the cell inner membrane. Key component of the proton channel; it plays a direct role in the translocation of protons across the membrane. The chain is ATP synthase subunit a from Nitrobacter hamburgensis (strain DSM 10229 / NCIMB 13809 / X14).